Consider the following 204-residue polypeptide: Fruiting body protein SC7 (204 aa).

An N-terminal signal peptide occupies residues 1-16 (MKLTVILLTAVLAASA). Positions 62–185 (LKAHNNERAQ…KTLWYYVCNY (124 aa)) constitute an SCP domain. Residues asparagine 80, asparagine 118, and asparagine 134 are each glycosylated (N-linked (GlcNAc...) asparagine).

The protein belongs to the CRISP family.

It localises to the secreted. The sequence is that of Fruiting body protein SC7 (SC7) from Schizophyllum commune (Split gill fungus).